Here is a 221-residue protein sequence, read N- to C-terminus: N-(5'-phosphoribosyl)anthranilate isomerase (221 aa).

The protein belongs to the TrpF family.

It catalyses the reaction N-(5-phospho-beta-D-ribosyl)anthranilate = 1-(2-carboxyphenylamino)-1-deoxy-D-ribulose 5-phosphate. It functions in the pathway amino-acid biosynthesis; L-tryptophan biosynthesis; L-tryptophan from chorismate: step 3/5. This is N-(5'-phosphoribosyl)anthranilate isomerase from Chlorobaculum tepidum (strain ATCC 49652 / DSM 12025 / NBRC 103806 / TLS) (Chlorobium tepidum).